The sequence spans 1744 residues: Tensin-1 (1744 aa).

The tract at residues 15-55 (SPAVNYELPSPGQSITKQVDTPDATRSPRGGQAHRKASRSM) is disordered. The Phosphatase tensin-type domain occupies 58-230 (TAAMESSCEL…HYFSGLLSGS (173 aa)). The C2 tensin-type domain maps to 235–361 (NKPLFLHHVI…GKVEFVFSYG (127 aa)). Disordered stretches follow at residues 467-505 (TLSVSSDSGNSTASTKTDRTDEPGAPGAPTGHAVLSPEE), 569-589 (DELPNQDGHSVGSLGTLSSLD), 666-686 (AQEHLAGYPQRQPASTSPAWL), 724-797 (PQAP…APSR), 934-956 (GSQQLLVSSPPSPTAPAQSQLPH), 982-1077 (RVAG…PGLA), and 1156-1437 (VPSP…GSAV). Positions 468-481 (LSVSSDSGNSTAST) are enriched in polar residues. The segment covering 580–589 (GSLGTLSSLD) has biased composition (low complexity). The span at 728-753 (ARSTSSREAVQRGLNSWQQQGGSRPP) shows a compositional bias: polar residues. A compositionally biased stretch (low complexity) spans 763–773 (SHSPSLSSCSP). The segment covering 774-783 (QPSPLQPMPP) has biased composition (pro residues). Composition is skewed to basic and acidic residues over residues 1004–1014 (TPSDSHYEKSS) and 1041–1054 (RPKEPHLHSYKEAF). Polar residues predominate over residues 1060–1069 (ASPSSLTSGG). Low complexity-rich tracts occupy residues 1156-1169 (VPSPVSTSSPIHSV) and 1208-1220 (SAHSSYQTSSPSS). Polar residues-rich tracts occupy residues 1344–1355 (LSRQSSASGYQP), 1370–1380 (GTSTPHSSSPD), and 1405–1420 (ERSNSLPNYATVNGKA). Positions 1421–1435 (SSPLSSGMSSPSSGS) are enriched in low complexity. The 110-residue stretch at 1472–1581 (WYKPDISREQ…ALPCKLVIPD (110 aa)) folds into the SH2 domain. The PTB domain occupies 1607-1743 (ACNVLFINSV…SRVMLGSGQK (137 aa)).

This sequence belongs to the PTEN phosphatase protein family. As to quaternary structure, binds to actin filaments. Interacts with phosphotyrosine-containing proteins. Post-translationally, tyrosine phosphorylated. In terms of tissue distribution, heart, gizzard, lung and skeletal muscle.

Its subcellular location is the cell surface. The protein resides in the cell junction. The protein localises to the focal adhesion. It localises to the cytoplasm. It is found in the cytoskeleton. May act as a protein phosphatase and/or a lipid phosphatase. Involved in fibrillar adhesion formation. Plays a role in cell polarization and migration. May be involved in cartilage development and in linking signal transduction pathways to the cytoskeleton. The polypeptide is Tensin-1 (TNS1) (Gallus gallus (Chicken)).